The following is a 398-amino-acid chain: Elongation factor Tu (398 aa).

The 198-residue stretch at 10–207 (KPHVNIGTIG…TADEYIPEPE (198 aa)) folds into the tr-type G domain. The tract at residues 19 to 26 (GHVDHGKT) is G1. 19 to 26 (GHVDHGKT) is a binding site for GTP. T26 contacts Mg(2+). A G2 region spans residues 63–67 (GITIN). The G3 stretch occupies residues 84-87 (DAPG). Residues 84–88 (DAPGH) and 139–142 (NKID) each bind GTP. The tract at residues 139 to 142 (NKID) is G4. Residues 177–179 (SAL) form a G5 region.

This sequence belongs to the TRAFAC class translation factor GTPase superfamily. Classic translation factor GTPase family. EF-Tu/EF-1A subfamily. As to quaternary structure, monomer.

Its subcellular location is the cytoplasm. The catalysed reaction is GTP + H2O = GDP + phosphate + H(+). In terms of biological role, GTP hydrolase that promotes the GTP-dependent binding of aminoacyl-tRNA to the A-site of ribosomes during protein biosynthesis. This is Elongation factor Tu from Streptococcus uberis (strain ATCC BAA-854 / 0140J).